We begin with the raw amino-acid sequence, 367 residues long: MADTTSKEVPLHSVQVEALVVMKIVKACAATYPTTATGSIVGMDSNGTLQITNSFPFPTADVAASDSHPNDHMAASNIAAAAPRSKANIVYQSEMIKMLKEVNVDANNVGWYTSANMGNFINTSLIENQFFYQKEPNERTVALVHDVSRSAQGALSLRAFRLSPNFMTAYKEGKFTTENMQKSKLTYKDILVELPIIVHNSHLLTSFLHQMPVELPKKELDFPASLADLTRNTPPTPLYPNLESLDLSIDPYLERTCDMLLDSIETHYTELNNFQYFQRQLTREQAKVTAWKTKRAAENASRATQKLAPLPEDEWERLFKLPTEPSRLEGMLNARQVDQYSRQVDGFTASITGKMFAVKSNLLPEQS.

Residues 14–166 (VQVEALVVMK…LRAFRLSPNF (153 aa)) enclose the MPN domain.

It belongs to the eIF-3 subunit H family. In terms of assembly, component of the eukaryotic translation initiation factor 3 (eIF-3) complex.

The protein localises to the cytoplasm. In terms of biological role, component of the eukaryotic translation initiation factor 3 (eIF-3) complex, which is involved in protein synthesis of a specialized repertoire of mRNAs and, together with other initiation factors, stimulates binding of mRNA and methionyl-tRNAi to the 40S ribosome. The eIF-3 complex specifically targets and initiates translation of a subset of mRNAs involved in cell proliferation. The protein is Eukaryotic translation initiation factor 3 subunit H of Sclerotinia sclerotiorum (strain ATCC 18683 / 1980 / Ss-1) (White mold).